The chain runs to 292 residues: Medium chain reductase/dehydrogenase ucsI (292 aa).

Cys43 serves as a coordination point for Zn(2+). Tyr49 is a binding site for substrate. The Zn(2+) site is built by His65 and Glu66. NAD(+) contacts are provided by residues 184–189 (GCGPVG), Asp208, Arg213, and 276–278 (IGA).

Belongs to the zinc-containing alcohol dehydrogenase family. It depends on Zn(2+) as a cofactor.

Its pathway is mycotoxin biosynthesis. Its function is as follows. Medium chain reductase/dehydrogenase; part of the gene cluster that mediates the biosynthesis of UCS1025A, a member of the pyrrolizidinone family that acts as a strong telomerase inhibitor and displays potent antibacterial and antitumor properties. These compounds share a hemiaminal-containing pyrrolizidinone core fused with a gamma-lactone, giving a furopyrrolizidine that is connected to a decalin fragment. The polyketide synthase module (PKS) of the PKS-NRPS ucsA is responsible for the synthesis of the polyketide backbone via the condensation of an acetyl-CoA starter unit with 6 malonyl-CoA units. The downstream nonribosomal peptide synthetase (NRPS) module then amidates the carboxyl end of the polyketide with a 2S,3S-methylproline derived from L-isoleucine by the 2-oxoglutarate-dependent dioxygenase ucsF which converts L-isoleucine to (4S,5S)-4-methylpyrroline-5-carboxylate that is further converted to 2S,3S-methylproline by the pyrroline-5-carboxylate reductase ucsG. Reductive release of the completed aminoacyl polyketide from the assembly line can form the 3-pyrrolin-2-one structure via an intramolecular Knoevenagel reaction. Because ucsA lacks a designated enoylreductase (ER) domain, the required activity is provided the enoyl reductase ucsL. This keto acyclic precursor is the substrate of the Diels-Alderase ucsH, that catalyzes the Diels-Alder cycloaddition. Oxidation of the 3S-methyl group to a carboxylate by the cytochrome P450 monooxygenase ucsK allows an oxa-Michael cyclization that might involve the reductase/dehydrogenase ucsI and which furnishes the furopyrrolizidine. The oxidase ucsJ likely plays a critical role in stereoselective reduction of the C5-C6 double bond to afford the required R-configured carboxylate group. Further enolization and oxidation at C5 by an unidentified enzyme affords the last intermediate that can undergo oxa-Michael cyclization to yield UCS1025A. This Acremonium sp protein is Medium chain reductase/dehydrogenase ucsI.